We begin with the raw amino-acid sequence, 467 residues long: Cytochrome c-552 (467 aa).

An N-terminal signal peptide occupies residues 1 to 27; that stretch reads MVKKLTGKSFALSALVAASFVAAGAMA. Histidine 87 serves as a coordination point for heme c. Heme contacts are provided by cysteine 115, cysteine 118, and lysine 119. Heme c-binding residues include cysteine 153, cysteine 156, histidine 157, cysteine 195, cysteine 198, and histidine 199. Ca(2+) contacts are provided by glutamate 201, tyrosine 202, lysine 250, and glutamine 252. Tyrosine 202 lines the substrate pocket. Histidine 253 contributes to the substrate binding site. Heme c contacts are provided by histidine 264, cysteine 271, cysteine 274, histidine 275, histidine 290, cysteine 303, cysteine 306, histidine 307, and histidine 382.

This sequence belongs to the cytochrome c-552 family. Ca(2+) is required as a cofactor. The cofactor is heme c.

Its subcellular location is the periplasm. It catalyses the reaction 6 Fe(III)-[cytochrome c] + NH4(+) + 2 H2O = 6 Fe(II)-[cytochrome c] + nitrite + 8 H(+). Its pathway is nitrogen metabolism; nitrate reduction (assimilation). Catalyzes the reduction of nitrite to ammonia, consuming six electrons in the process. The protein is Cytochrome c-552 of Shewanella amazonensis (strain ATCC BAA-1098 / SB2B).